Reading from the N-terminus, the 224-residue chain is 7-cyano-7-deazaguanine synthase (224 aa).

Position 10-20 (10-20) interacts with ATP; it reads LSGGLDSATVV. 4 residues coordinate Zn(2+): cysteine 189, cysteine 199, cysteine 202, and cysteine 205.

This sequence belongs to the QueC family. Zn(2+) is required as a cofactor.

The enzyme catalyses 7-carboxy-7-deazaguanine + NH4(+) + ATP = 7-cyano-7-deazaguanine + ADP + phosphate + H2O + H(+). Its pathway is purine metabolism; 7-cyano-7-deazaguanine biosynthesis. In terms of biological role, catalyzes the ATP-dependent conversion of 7-carboxy-7-deazaguanine (CDG) to 7-cyano-7-deazaguanine (preQ(0)). The protein is 7-cyano-7-deazaguanine synthase of Pseudomonas putida (strain ATCC 47054 / DSM 6125 / CFBP 8728 / NCIMB 11950 / KT2440).